We begin with the raw amino-acid sequence, 330 residues long: 1,8-cineole synthase (330 aa).

D81 provides a ligand contact to Mg(2+). Positions 81–85 (DDHFD) match the DDXXD motif motif. R174 provides a ligand contact to substrate. N220 and S224 together coordinate Mg(2+). An NXXXSXXXE motif motif is present at residues 220–228 (NDVLSLEKE). A substrate-binding site is contributed by K227. E228 provides a ligand contact to Mg(2+). 314-315 (RY) serves as a coordination point for substrate.

It belongs to the terpene synthase family. As to quaternary structure, homodimer. The cofactor is Mg(2+).

The enzyme catalyses (2E)-geranyl diphosphate + H2O = 1,8-cineole + diphosphate. It carries out the reaction neryl diphosphate + H2O = 1,8-cineole + diphosphate. Functionally, in vitro, catalyzes the formation of 1,8-cineole from geranyl diphosphate (GPP). Can also accept neryl diphosphate (NPP) as substrate to produce 1,8-cineole. The polypeptide is 1,8-cineole synthase (Streptomyces clavuligerus).